The following is a 365-amino-acid chain: Geranylgeranyl pyrophosphate synthase (365 aa).

Positions methionine 1–valine 11 are enriched in polar residues. A disordered region spans residues methionine 1–threonine 36. Low complexity predominate over residues serine 21–serine 34. Positions 78, 81, and 110 each coordinate isopentenyl diphosphate. Mg(2+) is bound by residues aspartate 117 and aspartate 121. Arginine 126 lines the dimethylallyl diphosphate pocket. Arginine 127 contributes to the isopentenyl diphosphate binding site. Dimethylallyl diphosphate is bound by residues lysine 211, threonine 212, and glutamine 247. A Mg(2+)-binding site is contributed by aspartate 250. Residues asparagine 254, lysine 263, and lysine 273 each contribute to the dimethylallyl diphosphate site.

This sequence belongs to the FPP/GGPP synthase family. Mg(2+) serves as cofactor.

It carries out the reaction isopentenyl diphosphate + dimethylallyl diphosphate = (2E)-geranyl diphosphate + diphosphate. It catalyses the reaction isopentenyl diphosphate + (2E)-geranyl diphosphate = (2E,6E)-farnesyl diphosphate + diphosphate. The catalysed reaction is isopentenyl diphosphate + (2E,6E)-farnesyl diphosphate = (2E,6E,10E)-geranylgeranyl diphosphate + diphosphate. Geranylgeranyl pyrophosphate synthase that catalyzes the trans-addition of the three molecules of IPP onto DMAPP to form geranylgeranyl pyrophosphate. Does not show any monoterpene nor sesquiterpene synthase activity. This is Geranylgeranyl pyrophosphate synthase from Melampsora lini (Rust fungus).